We begin with the raw amino-acid sequence, 179 residues long: Large ribosomal subunit protein uL6 (179 aa).

It belongs to the universal ribosomal protein uL6 family. Part of the 50S ribosomal subunit.

Functionally, this protein binds to the 23S rRNA, and is important in its secondary structure. It is located near the subunit interface in the base of the L7/L12 stalk, and near the tRNA binding site of the peptidyltransferase center. The sequence is that of Large ribosomal subunit protein uL6 from Rhodococcus jostii (strain RHA1).